Reading from the N-terminus, the 496-residue chain is Glycerol kinase (496 aa).

Residue threonine 12 participates in ADP binding. The ATP site is built by threonine 12, threonine 13, and serine 14. Threonine 12 lines the sn-glycerol 3-phosphate pocket. ADP is bound at residue arginine 16. 3 residues coordinate sn-glycerol 3-phosphate: arginine 82, glutamate 83, and tyrosine 134. 3 residues coordinate glycerol: arginine 82, glutamate 83, and tyrosine 134. Position 230 is a phosphohistidine; by HPr (histidine 230). Aspartate 244 serves as a coordination point for sn-glycerol 3-phosphate. Glycerol is bound by residues aspartate 244 and glutamine 245. ADP is bound by residues threonine 266 and glycine 309. Residues threonine 266, glycine 309, glutamine 313, and glycine 410 each coordinate ATP. Residues glycine 410 and asparagine 414 each coordinate ADP.

The protein belongs to the FGGY kinase family. As to quaternary structure, homotetramer and homodimer (in equilibrium). In terms of processing, the phosphoenolpyruvate-dependent sugar phosphotransferase system (PTS), including enzyme I, and histidine-containing protein (HPr) are required for the phosphorylation, which leads to the activation of the enzyme.

The enzyme catalyses glycerol + ATP = sn-glycerol 3-phosphate + ADP + H(+). Its pathway is polyol metabolism; glycerol degradation via glycerol kinase pathway; sn-glycerol 3-phosphate from glycerol: step 1/1. With respect to regulation, activated by phosphorylation and inhibited by fructose 1,6-bisphosphate (FBP). Key enzyme in the regulation of glycerol uptake and metabolism. Catalyzes the phosphorylation of glycerol to yield sn-glycerol 3-phosphate. This chain is Glycerol kinase, found in Bacillus thuringiensis (strain Al Hakam).